We begin with the raw amino-acid sequence, 347 residues long: Endophilin-A3 (347 aa).

Positions 1 to 21 are membrane-binding amphipathic helix; sequence MSVAGLKKQFHKASQLFSEKI. A BAR domain is found at 18–249; it reads SEKISGAEGT…LQMRISAASS (232 aa). Residues 60-87 are required for dimerization upon membrane association; the sequence is PNPAYRAKLGMLNTVSKIRGQVKTTGYP. Residues 181–201 are a coiled coil; it reads EEVRQAVEKFEESKELAERSM. The interval 218-254 is interaction with ARC; the sequence is FIEAALDYHRQSTEILQELQSKLQMRISAASSVPRRE. Positions 248-271 are disordered; the sequence is SSVPRREYKPRPVKRSSSELNGVS. Residue Ser265 is modified to Phosphoserine. One can recognise an SH3 domain in the interval 285–344; the sequence is MDQPCCRGLYDFEPENQGELGFKEGDIITLTNQIDENWYEGMIHGESGFFPINYVEVIVP.

This sequence belongs to the endophilin family. Interacts with ARC. Interacts with DNM1, SGIP1 and SYNJ1. Interacts with the huntingtin exon 1 protein (HDEX1P) containing a glutamine repeat in the pathological range and promotes formation of insoluble polyglutamine-containing aggregates in vivo. Interacts with DYDC1. Interacts with FASLG. Interacts with ATXN2. Interacts with BIN2. As to expression, brain and testis.

The protein localises to the cytoplasm. The protein resides in the early endosome membrane. Its function is as follows. Implicated in endocytosis. May recruit other proteins to membranes with high curvature. The protein is Endophilin-A3 (SH3GL3) of Homo sapiens (Human).